The following is a 227-amino-acid chain: Cytochrome c oxidase subunit 2 (227 aa).

Residues 1–14 (MAYPFQLGLQDATS) are Mitochondrial intermembrane-facing. Residues 15 to 45 (PIMEELANFHDHTLMIVFLISSLVLYIISSM) traverse the membrane as a helical segment. The Mitochondrial matrix portion of the chain corresponds to 46-59 (LTTKLTHTSTMDAQ). The chain crosses the membrane as a helical span at residues 60 to 87 (EVETIWTILPAVILILIALPSLRILYMM). Residues 88–227 (DEINNPALTV…HFENWSASMI (140 aa)) are Mitochondrial intermembrane-facing. The Cu cation site is built by His-161, Cys-196, Glu-198, Cys-200, His-204, and Met-207. Glu-198 contacts Mg(2+).

This sequence belongs to the cytochrome c oxidase subunit 2 family. As to quaternary structure, component of the cytochrome c oxidase (complex IV, CIV), a multisubunit enzyme composed of 14 subunits. The complex is composed of a catalytic core of 3 subunits MT-CO1, MT-CO2 and MT-CO3, encoded in the mitochondrial DNA, and 11 supernumerary subunits COX4I, COX5A, COX5B, COX6A, COX6B, COX6C, COX7A, COX7B, COX7C, COX8 and NDUFA4, which are encoded in the nuclear genome. The complex exists as a monomer or a dimer and forms supercomplexes (SCs) in the inner mitochondrial membrane with NADH-ubiquinone oxidoreductase (complex I, CI) and ubiquinol-cytochrome c oxidoreductase (cytochrome b-c1 complex, complex III, CIII), resulting in different assemblies (supercomplex SCI(1)III(2)IV(1) and megacomplex MCI(2)III(2)IV(2)). Found in a complex with TMEM177, COA6, COX18, COX20, SCO1 and SCO2. Interacts with TMEM177 in a COX20-dependent manner. Interacts with COX20. Interacts with COX16. The cofactor is Cu cation.

It localises to the mitochondrion inner membrane. It carries out the reaction 4 Fe(II)-[cytochrome c] + O2 + 8 H(+)(in) = 4 Fe(III)-[cytochrome c] + 2 H2O + 4 H(+)(out). Component of the cytochrome c oxidase, the last enzyme in the mitochondrial electron transport chain which drives oxidative phosphorylation. The respiratory chain contains 3 multisubunit complexes succinate dehydrogenase (complex II, CII), ubiquinol-cytochrome c oxidoreductase (cytochrome b-c1 complex, complex III, CIII) and cytochrome c oxidase (complex IV, CIV), that cooperate to transfer electrons derived from NADH and succinate to molecular oxygen, creating an electrochemical gradient over the inner membrane that drives transmembrane transport and the ATP synthase. Cytochrome c oxidase is the component of the respiratory chain that catalyzes the reduction of oxygen to water. Electrons originating from reduced cytochrome c in the intermembrane space (IMS) are transferred via the dinuclear copper A center (CU(A)) of subunit 2 and heme A of subunit 1 to the active site in subunit 1, a binuclear center (BNC) formed by heme A3 and copper B (CU(B)). The BNC reduces molecular oxygen to 2 water molecules using 4 electrons from cytochrome c in the IMS and 4 protons from the mitochondrial matrix. This is Cytochrome c oxidase subunit 2 (MT-CO2) from Malacomys longipes (Big-eared swamp rat).